The sequence spans 415 residues: G2/mitotic-specific cyclin cig1 (415 aa).

Disordered stretches follow at residues 54 to 74 (PTLI…DTFE) and 86 to 118 (EERS…ILTH). The segment covering 57-71 (IEGNNESSISSSTGD) has biased composition (low complexity). At S96 the chain carries Phosphoserine.

This sequence belongs to the cyclin family. Cyclin G subfamily.

Required for efficient passage of the G1/S transition. This Schizosaccharomyces pombe (strain 972 / ATCC 24843) (Fission yeast) protein is G2/mitotic-specific cyclin cig1 (cig1).